Here is a 50-residue protein sequence, read N- to C-terminus: Parvalbumin (50 aa).

The region spanning 38 to 50 (KTHEQVKKVFNIL) is the EF-hand domain.

This sequence belongs to the parvalbumin family.

Probably regulates the activity of the caudal neurosecretory system. Binds two calcium ions. The sequence is that of Parvalbumin from Scyliorhinus canicula (Small-spotted catshark).